Reading from the N-terminus, the 318-residue chain is Taste receptor type 2 member 7 (318 aa).

The Extracellular portion of the chain corresponds to 1–9 (MTDKVQTTL). A helical transmembrane segment spans residues 10–30 (LFLAIGEFSVGILGNAFIGLV). The Cytoplasmic portion of the chain corresponds to 31–55 (NCMDWVKKRKIASIDLILTSLAISR). The chain crosses the membrane as a helical span at residues 56–76 (ICLLCVILLDCFMLVLYPDVY). The Extracellular segment spans residues 77 to 94 (ATGKQMRIIDFFWTLTNH). A helical transmembrane segment spans residues 95 to 115 (LSIWFATCLSIYYFFKIANFF). Residues 116-128 (HPLFLWMKWRIDR) lie on the Cytoplasmic side of the membrane. The chain crosses the membrane as a helical span at residues 129-149 (VISWILLGCMVLSVFINLPAT). Residues 150-187 (ENLNADFRRCVKAKRKTNLTWSCRVTKAQHASTKLFLN) are Extracellular-facing. A glycan (N-linked (GlcNAc...) asparagine) is linked at N167. Residues 188–208 (LVTLLPFSVCLMSFFLLILSL) traverse the membrane as a helical segment. Residues 209-235 (WRHIRRMQLSATGCRDPSTEAHVRALK) are Cytoplasmic-facing. A helical transmembrane segment spans residues 236-256 (AVISFLLLFIAYYLSFLIATS). Over 257–266 (SYFIPETELA) the chain is Extracellular. The helical transmembrane segment at 267–287 (VIFGEFIALIYPSSHSFILIL) threads the bilayer. Over 288-318 (GNSKLRRASLKVLWTVMSILKGRKFQQHKQI) the chain is Cytoplasmic.

The protein belongs to the G-protein coupled receptor T2R family.

It localises to the membrane. In terms of biological role, gustducin-coupled receptor implicated in the perception of bitter compounds in the oral cavity and the gastrointestinal tract. Signals through PLCB2 and the calcium-regulated cation channel TRPM5. In Macaca mulatta (Rhesus macaque), this protein is Taste receptor type 2 member 7 (TAS2R7).